A 363-amino-acid chain; its full sequence is Cytochrome c oxidase subunit 2 (363 aa).

Positions 1–23 are disordered; the sequence is MTPRGPGRLQRLSQCRPQRGSGG. The first 41 residues, 1–41, serve as a signal peptide directing secretion; that stretch reads MTPRGPGRLQRLSQCRPQRGSGGPARGLRQLALAAMLGALA. The next 2 helical transmembrane spans lie at 71–91 and 118–138; these read LWIG…GLIF and LVLT…TVVV. Cu cation is bound by residues His254, Cys295, Cys299, and His303.

Belongs to the cytochrome c oxidase subunit 2 family. The cofactor is Cu cation. Heme serves as cofactor.

It localises to the cell membrane. It catalyses the reaction 4 Fe(II)-[cytochrome c] + O2 + 8 H(+)(in) = 4 Fe(III)-[cytochrome c] + 2 H2O + 4 H(+)(out). Its function is as follows. Subunits I and II form the functional core of the enzyme complex. Electrons originating in cytochrome c are transferred via heme a and Cu(A) to the binuclear center formed by heme a3 and Cu(B). This is Cytochrome c oxidase subunit 2 (ctaC) from Mycobacterium bovis (strain ATCC BAA-935 / AF2122/97).